The chain runs to 318 residues: Transcription factor zip-4 (318 aa).

Residues 1–13 are compositionally biased toward polar residues; it reads MYNYNYSRGNKSM. Disordered regions lie at residues 1 to 20, 147 to 205, 238 to 257, and 273 to 318; these read MYNY…PRFH, EKKP…TAAA, NNDA…LQKD, and ELQS…KSNY. Acidic residues predominate over residues 173 to 190; that stretch reads DYQEEGETSLSDNDESVD. The 64-residue stretch at 228–291 folds into the bZIP domain; sequence EPIYKLKRAR…ERDQQLIKQL (64 aa). The interval 232 to 266 is basic motif; that stretch reads KLKRARNNDAVRKSRNKAKELQLQKDEEYDEMKKR. A coiled-coil region spans residues 242–280; the sequence is VRKSRNKAKELQLQKDEEYDEMKKRITQLEAELQSEREG. The segment at 267–274 is leucine-zipper; it reads ITQLEAEL. Basic and acidic residues predominate over residues 275-298; sequence QSEREGRERDQQLIKQLIREKEST. Positions 307–318 are enriched in polar residues; sequence RNALESFNKSNY.

The protein belongs to the bZIP family. C/EBP subfamily.

It localises to the nucleus. Its function is as follows. Transcription factor that binds to the promoter and the enhancer regions of target genes. Involved in responding to mitochondrial damage. Has a protective role in response to infection by the Gram-negative bacterium P.aeruginosa. This is Transcription factor zip-4 from Caenorhabditis elegans.